The following is a 132-amino-acid chain: DNA-directed RNA polymerase subunit omega (132 aa).

Belongs to the RNA polymerase subunit omega family. In terms of assembly, the RNAP catalytic core consists of 2 alpha, 1 beta, 1 beta' and 1 omega subunit. When a sigma factor is associated with the core the holoenzyme is formed, which can initiate transcription.

The enzyme catalyses RNA(n) + a ribonucleoside 5'-triphosphate = RNA(n+1) + diphosphate. Functionally, promotes RNA polymerase assembly. Latches the N- and C-terminal regions of the beta' subunit thereby facilitating its interaction with the beta and alpha subunits. This chain is DNA-directed RNA polymerase subunit omega, found in Ehrlichia ruminantium (strain Welgevonden).